A 116-amino-acid chain; its full sequence is Holo-[acyl-carrier-protein] synthase (116 aa).

D5 and E50 together coordinate Mg(2+).

Belongs to the P-Pant transferase superfamily. AcpS family. Mg(2+) is required as a cofactor.

The protein resides in the cytoplasm. The catalysed reaction is apo-[ACP] + CoA = holo-[ACP] + adenosine 3',5'-bisphosphate + H(+). Functionally, transfers the 4'-phosphopantetheine moiety from coenzyme A to a Ser of acyl-carrier-protein. This chain is Holo-[acyl-carrier-protein] synthase, found in Campylobacter lari (strain RM2100 / D67 / ATCC BAA-1060).